The following is a 356-amino-acid chain: Galactosylgalactosylxylosylprotein 3-beta-glucuronosyltransferase sqv-8 (356 aa).

The Cytoplasmic portion of the chain corresponds to 1–9; that stretch reads MFPSRLLEK. Residues 10–30 form a helical; Signal-anchor for type II membrane protein membrane-spanning segment; the sequence is WWLRAFIALVIFFVWQLFYAI. The Lumenal portion of the chain corresponds to 31-356; that stretch reads NRVQSLEEER…LEAHALGVDN (326 aa). Residues N93 and N173 are each glycosylated (N-linked (GlcNAc...) asparagine). Residue D208 participates in Mn(2+) binding. Residues N246 and N272 are each glycosylated (N-linked (GlcNAc...) asparagine). E294 acts as the Proton acceptor in catalysis.

The protein belongs to the glycosyltransferase 43 family.

Its subcellular location is the membrane. The enzyme catalyses 3-O-(beta-D-galactosyl-(1-&gt;3)-beta-D-galactosyl-(1-&gt;4)-beta-D-xylosyl)-L-seryl-[protein] + UDP-alpha-D-glucuronate = 3-O-(beta-D-GlcA-(1-&gt;3)-beta-D-Gal-(1-&gt;3)-beta-D-Gal-(1-&gt;4)-beta-D-Xyl)-L-seryl-[protein] + UDP + H(+). Functionally, glycosyltransferase required for the biosynthesis of the tetrasaccharide (GlcA-Gal-Gal-Xyl-)Ser core linker of heparan sulfate and chondroitin sulfate. May be involved in the biosynthesis of the HNK-1 carbohydrate epitope on glycoproteins. Required for embryonic development. Involved in the elongation of the pharyngeal isthmus during the later stages of embryonic development. Involved in vulval epithelium invagination. This Caenorhabditis elegans protein is Galactosylgalactosylxylosylprotein 3-beta-glucuronosyltransferase sqv-8 (sqv-8).